A 236-amino-acid chain; its full sequence is Small ribosomal subunit protein uS2c (236 aa).

Belongs to the universal ribosomal protein uS2 family.

Its subcellular location is the plastid. It is found in the chloroplast. This is Small ribosomal subunit protein uS2c (rps2) from Draba nemorosa (Woodland whitlowgrass).